We begin with the raw amino-acid sequence, 481 residues long: Proline--tRNA ligase (481 aa).

It belongs to the class-II aminoacyl-tRNA synthetase family. ProS type 3 subfamily. Homodimer.

The protein resides in the cytoplasm. The catalysed reaction is tRNA(Pro) + L-proline + ATP = L-prolyl-tRNA(Pro) + AMP + diphosphate. Functionally, catalyzes the attachment of proline to tRNA(Pro) in a two-step reaction: proline is first activated by ATP to form Pro-AMP and then transferred to the acceptor end of tRNA(Pro). This is Proline--tRNA ligase from Prosthecochloris aestuarii (strain DSM 271 / SK 413).